Reading from the N-terminus, the 211-residue chain is ATP phosphoribosyltransferase (211 aa).

The protein belongs to the ATP phosphoribosyltransferase family. Short subfamily. As to quaternary structure, heteromultimer composed of HisG and HisZ subunits.

Its subcellular location is the cytoplasm. The enzyme catalyses 1-(5-phospho-beta-D-ribosyl)-ATP + diphosphate = 5-phospho-alpha-D-ribose 1-diphosphate + ATP. It functions in the pathway amino-acid biosynthesis; L-histidine biosynthesis; L-histidine from 5-phospho-alpha-D-ribose 1-diphosphate: step 1/9. Functionally, catalyzes the condensation of ATP and 5-phosphoribose 1-diphosphate to form N'-(5'-phosphoribosyl)-ATP (PR-ATP). Has a crucial role in the pathway because the rate of histidine biosynthesis seems to be controlled primarily by regulation of HisG enzymatic activity. This chain is ATP phosphoribosyltransferase, found in Bacillus cereus (strain G9842).